A 166-amino-acid polypeptide reads, in one-letter code: 3-isopropylmalate dehydratase small subunit (166 aa).

This sequence belongs to the LeuD family. LeuD type 2 subfamily. In terms of assembly, heterodimer of LeuC and LeuD.

It carries out the reaction (2R,3S)-3-isopropylmalate = (2S)-2-isopropylmalate. Its pathway is amino-acid biosynthesis; L-leucine biosynthesis; L-leucine from 3-methyl-2-oxobutanoate: step 2/4. Catalyzes the isomerization between 2-isopropylmalate and 3-isopropylmalate, via the formation of 2-isopropylmaleate. The sequence is that of 3-isopropylmalate dehydratase small subunit from Heliobacterium modesticaldum (strain ATCC 51547 / Ice1).